The primary structure comprises 104 residues: Flagellar hook-basal body complex protein FliE (104 aa).

Belongs to the FliE family.

It localises to the bacterial flagellum basal body. This is Flagellar hook-basal body complex protein FliE from Serratia proteamaculans (strain 568).